The following is a 271-amino-acid chain: Mannosyl-3-phosphoglycerate phosphatase (271 aa).

Asp13 serves as the catalytic Nucleophile. Asp13, Asp15, and Asp214 together coordinate Mg(2+).

It belongs to the HAD-like hydrolase superfamily. MPGP family. Requires Mg(2+) as cofactor.

It localises to the cytoplasm. It carries out the reaction 2-O-(alpha-D-mannosyl)-3-phosphoglycerate + H2O = (2R)-2-O-(alpha-D-mannosyl)-glycerate + phosphate. This chain is Mannosyl-3-phosphoglycerate phosphatase (yedP), found in Escherichia coli O6:K15:H31 (strain 536 / UPEC).